The following is a 60-amino-acid chain: MDPCDCSKTGKCNCGGSCTCTNCSCTSCKKSCCACCPSGCTKCASGCVCKGKTCDTTCCQ.

The segment at 1–28 (MDPCDCSKTGKCNCGGSCTCTNCSCTSC) is beta. Residues Cys-4, Cys-6, Cys-12, Cys-14, Cys-18, Cys-20, Cys-23, Cys-25, Cys-28, Cys-32, Cys-33, Cys-35, Cys-36, Cys-40, Cys-43, Cys-47, Cys-49, Cys-54, Cys-58, and Cys-59 each coordinate a divalent metal cation. Residues 29–60 (KKSCCACCPSGCTKCASGCVCKGKTCDTTCCQ) form an alpha region.

This sequence belongs to the metallothionein superfamily. Type 1 family.

In terms of biological role, metallothioneins have a high content of cysteine residues that bind various heavy metals. In Oryzias latipes (Japanese rice fish), this protein is Metallothionein (mt).